Here is a 324-residue protein sequence, read N- to C-terminus: Acetyl-coenzyme A carboxylase carboxyl transferase subunit alpha (324 aa).

One can recognise a CoA carboxyltransferase C-terminal domain in the interval 37–291; the sequence is ILEEKLENLE…DLMIQKTFQQ (255 aa).

It belongs to the AccA family. Acetyl-CoA carboxylase is a heterohexamer composed of biotin carboxyl carrier protein (AccB), biotin carboxylase (AccC) and two subunits each of ACCase subunit alpha (AccA) and ACCase subunit beta (AccD).

The protein resides in the cytoplasm. It catalyses the reaction N(6)-carboxybiotinyl-L-lysyl-[protein] + acetyl-CoA = N(6)-biotinyl-L-lysyl-[protein] + malonyl-CoA. Its pathway is lipid metabolism; malonyl-CoA biosynthesis; malonyl-CoA from acetyl-CoA: step 1/1. Its function is as follows. Component of the acetyl coenzyme A carboxylase (ACC) complex. First, biotin carboxylase catalyzes the carboxylation of biotin on its carrier protein (BCCP) and then the CO(2) group is transferred by the carboxyltransferase to acetyl-CoA to form malonyl-CoA. This Bacillus cereus (strain ATCC 14579 / DSM 31 / CCUG 7414 / JCM 2152 / NBRC 15305 / NCIMB 9373 / NCTC 2599 / NRRL B-3711) protein is Acetyl-coenzyme A carboxylase carboxyl transferase subunit alpha.